A 287-amino-acid polypeptide reads, in one-letter code: Nucleotide-binding protein Hhal_2130 (287 aa).

11-18 (GLSGSGKS) contributes to the ATP binding site. Residue 63-66 (DARN) coordinates GTP.

The protein belongs to the RapZ-like family.

Displays ATPase and GTPase activities. In Halorhodospira halophila (strain DSM 244 / SL1) (Ectothiorhodospira halophila (strain DSM 244 / SL1)), this protein is Nucleotide-binding protein Hhal_2130.